Reading from the N-terminus, the 983-residue chain is GPI ethanolamine phosphate transferase 2, catalytic subunit (983 aa).

Topologically, residues 1 to 431 are lumenal; the sequence is MRLGSGTFAT…SLSAQVAQYD (431 aa). Residue N194 is glycosylated (N-linked (GlcNAc...) asparagine). 12 consecutive transmembrane segments (helical) span residues 432 to 452, 471 to 491, 506 to 526, 552 to 572, 699 to 719, 721 to 741, 752 to 772, 789 to 809, 812 to 832, 879 to 899, 919 to 939, and 955 to 975; these read IYSM…LLLS, GFSL…VIVC, LAAG…VSVL, LLIL…SFVE, VLAA…CSPV, KAAL…IGSV, ISKG…ILFT, LKTV…ALLF, HNLP…KFIW, VEIP…VLWA, ACFC…VLVT, and LLYE…FTAM.

This sequence belongs to the PIGG/PIGN/PIGO family. PIGG subfamily. As to quaternary structure, part of the ethanolamine phosphate transferase 2 complex composed by PIGG and PIGF. PIGF is required to stabilize it. Competes with PIGO for the binding of PIGF.

It is found in the endoplasmic reticulum membrane. It functions in the pathway glycolipid biosynthesis; glycosylphosphatidylinositol-anchor biosynthesis. In terms of biological role, catalytic subunit of the ethanolamine phosphate transferase 2 complex that transfers an ethanolamine phosphate (EtNP) from a phosphatidylethanolamine (PE) to the 6-OH position of the second alpha-1,6-linked mannose of a 6-PEtn-alpha-D-Man-(1-&gt;2)-alpha-D-Man-(1-&gt;6)-2-PEtn-alpha-D-Man-(1-&gt;4)-alpha-D-GlcN-(1-&gt;6)-(1-radyl,2-acyl-sn-glycero-3-phospho)-2-acyl-inositol (also termed H7) intermediate to generate a 6-PEtn-alpha-D-Man-(1-&gt;2)-6-PEtn-alpha-D-Man-(1-&gt;6)-2-PEtn-alpha-D-Man-(1-&gt;4)-alpha-D-GlcN-(1-&gt;6)-(1-radyl,2-acyl-sn-glycero-3-phospho)-2-acyl-inositol (also termed H8) and participates in the eleventh step of the glycosylphosphatidylinositol-anchor biosynthesis. The protein is GPI ethanolamine phosphate transferase 2, catalytic subunit of Homo sapiens (Human).